A 202-amino-acid polypeptide reads, in one-letter code: Small ribosomal subunit protein uS4c (202 aa).

The 64-residue stretch at M90–I153 folds into the S4 RNA-binding domain.

Belongs to the universal ribosomal protein uS4 family. Part of the 30S ribosomal subunit. Contacts protein S5. The interaction surface between S4 and S5 is involved in control of translational fidelity.

The protein localises to the plastid. It localises to the chloroplast. In terms of biological role, one of the primary rRNA binding proteins, it binds directly to 16S rRNA where it nucleates assembly of the body of the 30S subunit. Functionally, with S5 and S12 plays an important role in translational accuracy. This chain is Small ribosomal subunit protein uS4c (rps4), found in Sphaerocarpos donnelli (Liverwort).